The sequence spans 378 residues: Integrator complex assembly factor WDR73 (378 aa).

WD repeat units lie at residues 73 to 113, 121 to 163, 167 to 205, 214 to 255, 266 to 305, and 322 to 371; these read DFKV…VWQV, KAVS…VVDL, KTTY…LVDT, NRSP…LLDP, QCPV…VYDA, and EPLF…VWDW.

The protein belongs to the WD repeat WDR73 family. In terms of assembly, interacts with INTS9 and INTS11; the interaction is direct. Part of the multiprotein complex composed of BRAT1, WDR73, as well as integrator complex subunits INTS9 and INTS11. Expressed in kidney and brain. In the kidney, expressed in glomeruli, most probably in podocytes, and in tubules (at protein level). In the brain, expressed in the cerebellum, with high levels in Purkinje cells and their projecting axons, in the deep cerebellar nuclei and in pyramidal neurons of the cerebral cortex (at protein level). In the white matter, mainly present in astrocytes, but not in oligodendrocytes (at protein level). Also highly expressed in endothelial cells of cerebral capillaries (at protein level).

The protein localises to the cytoplasm. Its subcellular location is the cytoskeleton. The protein resides in the spindle. It is found in the spindle pole. It localises to the cleavage furrow. Component of a multiprotein complex required for the assembly of the RNA endonuclease module of the integrator complex. Associates with INTS9 and INTS11 in the cytoplasm, stabilizing the INTS9-INTS11 heterodimer and blocking the active site of INTS11. BRAT1 then joins the complex and plugs the active site of INTS11, leading to WDR73 release and nuclear import of INTS9 and INTS11. This is Integrator complex assembly factor WDR73 from Homo sapiens (Human).